The chain runs to 310 residues: MPHTSPETEAQRDSNAPLVVVLLGPTASGKTALALELAERFDLEIINVDSRQLYQEMSVGTAKPSPEQQARIRHHLLDLRPPDQPITLQEFQEEALQAVNQSLAKRGAAFLVGGSGLYLKALTAGLRPPAVAPQPALRRQLAQLGQPLCHQLLNTADPEAAVRIASADALRTQRALEVLYATGAPMSRQTSASPPPWRVLELGLNPLDLRQRISARTQALYSQGLVEETRQLRERYGPELPLLQTIGYGEALQVLAGDLSRPAAIAHTTRRTQQFAKRQRTWFRRQHQPHWLPDDNPLNEAGRLIEAGLG.

Residue 24–31 (GPTASGKT) coordinates ATP. A substrate-binding site is contributed by 26–31 (TASGKT). The interaction with substrate tRNA stretch occupies residues 49-52 (DSRQ).

The protein belongs to the IPP transferase family. Monomer. Mg(2+) is required as a cofactor.

It carries out the reaction adenosine(37) in tRNA + dimethylallyl diphosphate = N(6)-dimethylallyladenosine(37) in tRNA + diphosphate. In terms of biological role, catalyzes the transfer of a dimethylallyl group onto the adenine at position 37 in tRNAs that read codons beginning with uridine, leading to the formation of N6-(dimethylallyl)adenosine (i(6)A). This is tRNA dimethylallyltransferase from Synechococcus sp. (strain WH7803).